We begin with the raw amino-acid sequence, 286 residues long: Elongation factor Ts (286 aa).

Positions 79–82 (TDFV) are involved in Mg(2+) ion dislocation from EF-Tu.

The protein belongs to the EF-Ts family.

It localises to the cytoplasm. Its function is as follows. Associates with the EF-Tu.GDP complex and induces the exchange of GDP to GTP. It remains bound to the aminoacyl-tRNA.EF-Tu.GTP complex up to the GTP hydrolysis stage on the ribosome. The sequence is that of Elongation factor Ts from Wolbachia pipientis wMel.